The primary structure comprises 411 residues: LIM domain-binding protein 1 (411 aa).

N-acetylserine is present on Ser2. Residue Thr61 is modified to Phosphothreonine. Phosphoserine occurs at positions 265 and 302. 2 disordered regions span residues 284-330 and 367-411; these read PPAE…TFAL and DAAN…QASQ. Over residues 302 to 318 the composition is skewed to low complexity; sequence SGGSTMSSGGGNTNNSN. Residues 336 to 375 enclose the LIM interaction domain (LID) domain; the sequence is DVMVVGEPTLMGGEFGDEDERLITRLENTQFDAANGIDDE.

The protein belongs to the LDB family. As to quaternary structure, interacts with ESR1. Forms homodimers and heterodimers. Interacts with and activates LHX1/LIM1. Interacts with the LIM domains of ISL1 and LMO2. Can assemble in a complex with LMO2 and TAL1/SCL but does not interact with TAL1/SCL directly. Strongly interacts with the LIM2 domain of LMX1A and more weakly with the LIM1 domain. Homodimerization is not required for, and does not effect, LMX1A-binding. Component of a nuclear TAL-1 complex composed at least of CBFA2T3, LDB1, TAL1 and TCF3. Interacts with LHX6 and LHX9. At neuronal promoters, forms a complex with LHX3 involved in the specification of interneurons, in motor neurons, it is displaced by ISL1 to form a ternary complex in which ISL1 contacts both LHX3 and LDB1. Interacts with SLK; leading to negatively regulate SLK kinase activity. Interacts with YWHAZ. Interacts with PRDM1/BLIMP1. Interacts with LMO4. Interacts with RLIM/RNF12; the interaction inhibits the ubiquitination of LMO proteins. Ubiquitinated by RLIM/RNF12, leading to its degradation by the proteasome. Expressed in multiple adult tissues including heart, brain, liver, kidney, testis, lung and muscle, with expression highest in the pituitary gland and skin.

The protein resides in the nucleus. In terms of biological role, binds to the LIM domain of a wide variety of LIM domain-containing transcription factors. May regulate the transcriptional activity of LIM-containing proteins by determining specific partner interactions. Plays a role in the development of interneurons and motor neurons in cooperation with LHX3 and ISL1. Acts synergistically with LHX1/LIM1 in axis formation and activation of gene expression. Acts with LMO2 in the regulation of red blood cell development, maintaining erythroid precursors in an immature state. This is LIM domain-binding protein 1 (Ldb1) from Mus musculus (Mouse).